A 276-amino-acid polypeptide reads, in one-letter code: S-adenosylmethionine decarboxylase proenzyme (276 aa).

Serine 124 serves as the catalytic Schiff-base intermediate with substrate; via pyruvic acid. Pyruvic acid (Ser); by autocatalysis is present on serine 124. The active-site Proton acceptor; for processing activity is the histidine 129. Cysteine 152 (proton donor; for catalytic activity) is an active-site residue.

This sequence belongs to the prokaryotic AdoMetDC family. Type 2 subfamily. As to quaternary structure, heterooctamer of four alpha and four beta chains arranged as a tetramer of alpha/beta heterodimers. It depends on pyruvate as a cofactor. Post-translationally, is synthesized initially as an inactive proenzyme. Formation of the active enzyme involves a self-maturation process in which the active site pyruvoyl group is generated from an internal serine residue via an autocatalytic post-translational modification. Two non-identical subunits are generated from the proenzyme in this reaction, and the pyruvate is formed at the N-terminus of the alpha chain, which is derived from the carboxyl end of the proenzyme. The post-translation cleavage follows an unusual pathway, termed non-hydrolytic serinolysis, in which the side chain hydroxyl group of the serine supplies its oxygen atom to form the C-terminus of the beta chain, while the remainder of the serine residue undergoes an oxidative deamination to produce ammonia and the pyruvoyl group blocking the N-terminus of the alpha chain.

It carries out the reaction S-adenosyl-L-methionine + H(+) = S-adenosyl 3-(methylsulfanyl)propylamine + CO2. The protein operates within amine and polyamine biosynthesis; S-adenosylmethioninamine biosynthesis; S-adenosylmethioninamine from S-adenosyl-L-methionine: step 1/1. Functionally, catalyzes the decarboxylation of S-adenosylmethionine to S-adenosylmethioninamine (dcAdoMet), the propylamine donor required for the synthesis of the polyamines spermine and spermidine from the diamine putrescine. This is S-adenosylmethionine decarboxylase proenzyme from Desulfitobacterium hafniense (strain DSM 10664 / DCB-2).